The primary structure comprises 258 residues: Meiotic drive suppressor wtf20 (258 aa).

The tract at residues 1–71 (MKNNYTSLKS…GPTEIANPNV (71 aa)) is disordered. Positions 19 to 30 (KTDHEIDLEKGL) are enriched in basic and acidic residues. 3 helical membrane passes run 84–106 (IYFLLRLLISVLAVSVVFFTAWV), 121–140 (FSVTIGITCPILFIAIFYFY), and 196–216 (SASAFTFMAVSSILIFIAETV).

The protein belongs to the WTF family. In terms of assembly, homomer. Interacts with other proteins that exhibit high sequence similarity.

Its subcellular location is the spore membrane. It is found in the vacuole membrane. Functionally, acts as a suppressor component of the dual wtf meiotic drive system, and can suppress but not confer meiotic drive by compatible poisons. Wtf meiotic drive systems promote unequal transmission of alleles from the parental zygote to progeny spores by encoding a poison and an antidote from the same locus; the poison is trans-acting and forms toxic aggregates in all spores within an ascus, wherease the antidote is spore-specific and targets aggregates for degradation by the vacuole. Meiotic drive by wtf systems therefore lead to poisoning of all progeny that do not inherit the dual poison/antidote allele, or express a compatible antidote. This chain is Meiotic drive suppressor wtf20, found in Schizosaccharomyces pombe (strain 972 / ATCC 24843) (Fission yeast).